The following is a 352-amino-acid chain: Transcription factor BHLH156 (352 aa).

The disordered stretch occupies residues 59-141 (GGDDDDNGGV…RSKTIVSERK (83 aa)). The tract at residues 130 to 143 (RDRSKTIVSERKRR) is basic motif. The region spanning 130–179 (RDRSKTIVSERKRRVRMKEKLYELRALVPNITKMDKASIIADAVVYVKDL) is the bHLH domain. Residues 144-179 (VRMKEKLYELRALVPNITKMDKASIIADAVVYVKDL) are helix-loop-helix motif. The segment at 194-216 (EEARPIRPPPPSAAAQRPQRQPR) is disordered. The segment covering 206-216 (AAAQRPQRQPR) has biased composition (low complexity).

This sequence belongs to the bHLH protein family. As to quaternary structure, forms homodimers. Interacts with IRO2 in the nucleus. In terms of tissue distribution, expressed in the meristematic zone of lateral and primary roots.

It is found in the nucleus. Transcription factor involved in positive regulation of genes involved in strategy II iron acquisition, including genes for mugineic acid (MA) family phytosiderophores biosynthesis, and genes involved in S-adenosylmethionine cycle and iron transport. May play a role in the regulation of iron deficiency response by promoting the nuclear localization of IRO2. Possesses transactivation activity in yeast. The polypeptide is Transcription factor BHLH156 (Oryza sativa subsp. japonica (Rice)).